The sequence spans 434 residues: Salicylate hydroxylase (434 aa).

FAD is bound at residue 9–38 (RIGIVGGGISGVALALELCRYSHIQVQLFE).

In terms of assembly, monomer. It depends on FAD as a cofactor.

It catalyses the reaction salicylate + NADH + O2 + 2 H(+) = catechol + CO2 + NAD(+) + H2O. It functions in the pathway aromatic compound metabolism; naphthalene degradation. This Pseudomonas putida (Arthrobacter siderocapsulatus) protein is Salicylate hydroxylase (nahG).